Consider the following 347-residue polypeptide: MERARRRGGGGGRGRGGKNVGGSGLSKSRLYPQAQHSHYPHYAASATPNQAGGAAEIQELASKRVDIQKKRFYLDVKQSSRGRFLKIAEVWIGRGRQDNIRKSKLTLSLSVAAELKDCLGDFIEHYAHLGLKGHRQEHGHSKEQGSRRRQKHSAPSPPVSVGSEEHPHSVLKTDYIERDNRKYYLDLKENQRGRFLRIRQTMMRGTGMIGYFGHSLGQEQTIVLPAQGMIEFRDALVQLIEDYGEGDIEERRGGDDDPLELPEGTSFRVDNKRFYFDVGSNKYGIFLKVSEVRPPYRNTITVPFKAWTRFGENFIKYEEEMRKICNSHKEKRMDGRKASGEEQECLD.

2 disordered regions span residues 1-34 (MERARRRGGGGGRGRGGKNVGGSGLSKSRLYPQA) and 133-169 (GHRQEHGHSKEQGSRRRQKHSAPSPPVSVGSEEHPHS). A compositionally biased stretch (gly residues) spans 9–24 (GGGGRGRGGKNVGGSG). A DNA-binding region spans residues 51-293 (AGGAAEIQEL…GIFLKVSEVR (243 aa)). Positions 134–146 (HRQEHGHSKEQGS) are enriched in basic and acidic residues. Phosphoserine occurs at positions 160, 163, and 339.

Belongs to the PUR DNA-binding protein family. Isoform 1 is expressed in testis and glioblastoma. Isoform 2 is expressed in fetal lung.

It localises to the nucleus. The protein is Purine-rich element-binding protein gamma (PURG) of Homo sapiens (Human).